Consider the following 301-residue polypeptide: Glycine--tRNA ligase alpha subunit (301 aa).

Belongs to the class-II aminoacyl-tRNA synthetase family. In terms of assembly, tetramer of two alpha and two beta subunits.

It localises to the cytoplasm. It catalyses the reaction tRNA(Gly) + glycine + ATP = glycyl-tRNA(Gly) + AMP + diphosphate. The sequence is that of Glycine--tRNA ligase alpha subunit from Shewanella oneidensis (strain ATCC 700550 / JCM 31522 / CIP 106686 / LMG 19005 / NCIMB 14063 / MR-1).